The following is a 443-amino-acid chain: POU domain, class 3, transcription factor 3-B (443 aa).

Disordered regions lie at residues 21-40, 100-150, and 182-244; these read IVHS…VTSV, SPWS…AGAW, and NGML…PTSD. Residues 101-121 show a composition bias toward polar residues; that stretch reads PWSSSPVGMTGSPQQQDVKNN. The span at 210–225 shows a compositional bias: basic residues; that stretch reads SHHHHHHHQHQHHQQA. The POU-specific domain occupies 238 to 312; sequence EDTPTSDDLE…LLNKWLEEAD (75 aa). Ser-317 is modified (phosphoserine). Positions 330–389 form a DNA-binding region, homeobox; sequence KRKKRTSIEVSVKGALESHFLKCPKPSAQEITSLADNLQLEKEVVRVWFCNRRQKEKRMT.

The protein belongs to the POU transcription factor family. Class-3 subfamily. Predominantly expressed in the central nervous system.

Its subcellular location is the nucleus. Its function is as follows. Transcription factor that may play important roles in patterning the embryonic brain. The protein is POU domain, class 3, transcription factor 3-B (pou3f3b) of Danio rerio (Zebrafish).